The chain runs to 117 residues: Small ribosomal subunit protein uS13 (117 aa).

The tract at residues Ser-94–Lys-117 is disordered.

It belongs to the universal ribosomal protein uS13 family. As to quaternary structure, part of the 30S ribosomal subunit. Forms a loose heterodimer with protein S19. Forms two bridges to the 50S subunit in the 70S ribosome.

In terms of biological role, located at the top of the head of the 30S subunit, it contacts several helices of the 16S rRNA. In the 70S ribosome it contacts the 23S rRNA (bridge B1a) and protein L5 of the 50S subunit (bridge B1b), connecting the 2 subunits; these bridges are implicated in subunit movement. Contacts the tRNAs in the A and P-sites. This chain is Small ribosomal subunit protein uS13, found in Vesicomyosocius okutanii subsp. Calyptogena okutanii (strain HA).